Reading from the N-terminus, the 85-residue chain is Anti-neuroexcitation peptide 2 (85 aa).

The N-terminal stretch at 1 to 21 is a signal peptide; sequence MKLSLLLVISASMLIDGLVNA. Residues 22-82 form the LCN-type CS-alpha/beta domain; the sequence is DGYIRGSNGC…TWKSESNTCG (61 aa). Cystine bridges form between C31-C81, C35-C56, C42-C63, and C46-C65.

Belongs to the long (4 C-C) scorpion toxin superfamily. Sodium channel inhibitor family. Beta subfamily. As to expression, expressed by the venom gland.

It is found in the secreted. Binds to sodium channels (Nav) and inhibits them. Recombinant ANEP delays the convulsion seizure of insect models by 18% and shows anti-neuroexcitatory activity. The protein is Anti-neuroexcitation peptide 2 of Olivierus martensii (Manchurian scorpion).